Reading from the N-terminus, the 128-residue chain is Flagellar basal body rod protein FlgB (128 aa).

The protein belongs to the flagella basal body rod proteins family. The basal body constitutes a major portion of the flagellar organelle and consists of a number of rings mounted on a central rod. In Gram-negative bacteria, at least four rings, L, P, S and M are present, whereas Gram-positive bacteria lack the L and P rings. The rod consists of about 26 subunits of FlgG in the distal portion, and FlgB, FlgC and FlgF build up the proximal portion of the rod with about 6 subunits each. Rod assembly occurs by export via the flagellum-specific pathway of its constituent proteins and by their incorporation into the rod structure in the probable order of FlgB, FlgC, FlgF and FlgG. Another protein, FliE, also assembles onto the stable rod structure.

It localises to the bacterial flagellum basal body. Structural component of flagellum, the bacterial motility apparatus. Part of the rod structure of flagellar basal body. The polypeptide is Flagellar basal body rod protein FlgB (Cereibacter sphaeroides (strain ATCC 17023 / DSM 158 / JCM 6121 / CCUG 31486 / LMG 2827 / NBRC 12203 / NCIMB 8253 / ATH 2.4.1.) (Rhodobacter sphaeroides)).